The sequence spans 347 residues: DNA-directed RNA polymerase subunit alpha (347 aa).

The interval 1–226 (MLISQRPTLS…ELFGLARELN (226 aa)) is alpha N-terminal domain (alpha-NTD). The segment at 243-347 (HIASFALPID…SQDYAETEQL (105 aa)) is alpha C-terminal domain (alpha-CTD). The segment at 326–347 (TTGTWSTDGAYDSQDYAETEQL) is disordered.

It belongs to the RNA polymerase alpha chain family. In terms of assembly, homodimer. The RNAP catalytic core consists of 2 alpha, 1 beta, 1 beta' and 1 omega subunit. When a sigma factor is associated with the core the holoenzyme is formed, which can initiate transcription.

It catalyses the reaction RNA(n) + a ribonucleoside 5'-triphosphate = RNA(n+1) + diphosphate. Functionally, DNA-dependent RNA polymerase catalyzes the transcription of DNA into RNA using the four ribonucleoside triphosphates as substrates. The polypeptide is DNA-directed RNA polymerase subunit alpha (Mycobacterium leprae (strain TN)).